The following is a 223-amino-acid chain: uncharacterized protein (223 aa).

The next 5 membrane-spanning stretches (helical) occupy residues Leu28–Thr48, Leu59–Ala79, Ala88–Ile108, Ile128–Ser148, and Ala176–Val196.

It localises to the cell membrane. This is an uncharacterized protein from Mycoplasma pneumoniae (strain ATCC 29342 / M129 / Subtype 1) (Mycoplasmoides pneumoniae).